The primary structure comprises 249 residues: 4-hydroxy-tetrahydrodipicolinate reductase (249 aa).

NAD(+)-binding positions include 77 to 79 (ATT) and 101 to 104 (SYNT). His133 (proton donor/acceptor) is an active-site residue. His134 provides a ligand contact to (S)-2,3,4,5-tetrahydrodipicolinate. Residue Lys137 is the Proton donor of the active site. Residue 143-144 (GT) participates in (S)-2,3,4,5-tetrahydrodipicolinate binding.

The protein belongs to the DapB family.

The protein localises to the cytoplasm. The catalysed reaction is (S)-2,3,4,5-tetrahydrodipicolinate + NAD(+) + H2O = (2S,4S)-4-hydroxy-2,3,4,5-tetrahydrodipicolinate + NADH + H(+). The enzyme catalyses (S)-2,3,4,5-tetrahydrodipicolinate + NADP(+) + H2O = (2S,4S)-4-hydroxy-2,3,4,5-tetrahydrodipicolinate + NADPH + H(+). Its pathway is amino-acid biosynthesis; L-lysine biosynthesis via DAP pathway; (S)-tetrahydrodipicolinate from L-aspartate: step 4/4. Functionally, catalyzes the conversion of 4-hydroxy-tetrahydrodipicolinate (HTPA) to tetrahydrodipicolinate. This Exiguobacterium sp. (strain ATCC BAA-1283 / AT1b) protein is 4-hydroxy-tetrahydrodipicolinate reductase.